A 195-amino-acid chain; its full sequence is HTH-type transcriptional regulator BetI (195 aa).

An HTH tetR-type domain is found at 8–68 (SIRRRQLIDA…ATMRDITSQL (61 aa)). Residues 31-50 (TIAQIARRAGVSTGIISHYF) constitute a DNA-binding region (H-T-H motif).

It functions in the pathway amine and polyamine biosynthesis; betaine biosynthesis via choline pathway [regulation]. In terms of biological role, repressor involved in the biosynthesis of the osmoprotectant glycine betaine. It represses transcription of the choline transporter BetT and the genes of BetAB involved in the synthesis of glycine betaine. The chain is HTH-type transcriptional regulator BetI from Escherichia coli O127:H6 (strain E2348/69 / EPEC).